The chain runs to 268 residues: uncharacterized protein (268 aa).

This is an uncharacterized protein from Metamycoplasma hominis (strain ATCC 23114 / DSM 25592 / NBRC 14850 / NCTC 10111 / PG21) (Mycoplasma hominis).